A 311-amino-acid polypeptide reads, in one-letter code: Ribosomal protein L11 methyltransferase (311 aa).

S-adenosyl-L-methionine contacts are provided by Thr-160, Gly-181, Asp-203, and Asn-246.

Belongs to the methyltransferase superfamily. PrmA family.

Its subcellular location is the cytoplasm. The enzyme catalyses L-lysyl-[protein] + 3 S-adenosyl-L-methionine = N(6),N(6),N(6)-trimethyl-L-lysyl-[protein] + 3 S-adenosyl-L-homocysteine + 3 H(+). In terms of biological role, methylates ribosomal protein L11. The polypeptide is Ribosomal protein L11 methyltransferase (Macrococcus caseolyticus (strain JCSC5402) (Macrococcoides caseolyticum)).